Consider the following 256-residue polypeptide: 5'-nucleotidase SurE (256 aa).

A divalent metal cation-binding residues include Asp-8, Asp-9, Ser-40, and Asn-92.

The protein belongs to the SurE nucleotidase family. The cofactor is a divalent metal cation.

It is found in the cytoplasm. It catalyses the reaction a ribonucleoside 5'-phosphate + H2O = a ribonucleoside + phosphate. Its function is as follows. Nucleotidase that shows phosphatase activity on nucleoside 5'-monophosphates. This chain is 5'-nucleotidase SurE, found in Rhizobium meliloti (strain 1021) (Ensifer meliloti).